Here is a 184-residue protein sequence, read N- to C-terminus: Dirigent protein 14 (184 aa).

The signal sequence occupies residues 1–20; that stretch reads MANQIYLFSLICLSVLLCQS. Residues C36 and C182 are joined by a disulfide bond. N55 and N119 each carry an N-linked (GlcNAc...) asparagine glycan.

The protein belongs to the plant dirigent protein family. In terms of assembly, homodimer.

It is found in the secreted. It localises to the extracellular space. The protein localises to the apoplast. In terms of biological role, dirigent proteins impart stereoselectivity on the phenoxy radical-coupling reaction, yielding optically active lignans from two molecules of coniferyl alcohol in the biosynthesis of lignans, flavonolignans, and alkaloids and thus plays a central role in plant secondary metabolism. In Arabidopsis thaliana (Mouse-ear cress), this protein is Dirigent protein 14 (DIR14).